Reading from the N-terminus, the 74-residue chain is Protein SMIM7 homolog (74 aa).

Residues 53-73 (FRAFIGLWNIFIMFLMLVFFG) form a helical membrane-spanning segment.

Belongs to the SMIM7 family.

The protein resides in the membrane. This Ixodes scapularis (Black-legged tick) protein is Protein SMIM7 homolog.